A 180-amino-acid chain; its full sequence is Putative methyltransferase YrhH (180 aa).

The protein belongs to the methyltransferase superfamily.

This Bacillus subtilis (strain 168) protein is Putative methyltransferase YrhH (yrhH).